A 274-amino-acid chain; its full sequence is NH(3)-dependent NAD(+) synthetase (274 aa).

Residue 46-53 (GISGGQDS) coordinates ATP. Asp52 serves as a coordination point for Mg(2+). Arg140 serves as a coordination point for deamido-NAD(+). Thr160 contacts ATP. Glu165 serves as a coordination point for Mg(2+). Lys173 and Asp180 together coordinate deamido-NAD(+). Lys189 and Thr211 together coordinate ATP. 260–261 (HK) is a deamido-NAD(+) binding site.

This sequence belongs to the NAD synthetase family. As to quaternary structure, homodimer.

It carries out the reaction deamido-NAD(+) + NH4(+) + ATP = AMP + diphosphate + NAD(+) + H(+). Its pathway is cofactor biosynthesis; NAD(+) biosynthesis; NAD(+) from deamido-NAD(+) (ammonia route): step 1/1. Catalyzes the ATP-dependent amidation of deamido-NAD to form NAD. Uses ammonia as a nitrogen source. This chain is NH(3)-dependent NAD(+) synthetase, found in Listeria monocytogenes serovar 1/2a (strain ATCC BAA-679 / EGD-e).